A 420-amino-acid polypeptide reads, in one-letter code: Glutamyl-tRNA reductase (420 aa).

Residues 49–52 (TCNR), S107, 112–114 (EPQ), and Q118 contribute to the substrate site. C50 (nucleophile) is an active-site residue. 187–192 (GAGETI) provides a ligand contact to NADP(+).

The protein belongs to the glutamyl-tRNA reductase family. As to quaternary structure, homodimer.

It carries out the reaction (S)-4-amino-5-oxopentanoate + tRNA(Glu) + NADP(+) = L-glutamyl-tRNA(Glu) + NADPH + H(+). Its pathway is porphyrin-containing compound metabolism; protoporphyrin-IX biosynthesis; 5-aminolevulinate from L-glutamyl-tRNA(Glu): step 1/2. Its function is as follows. Catalyzes the NADPH-dependent reduction of glutamyl-tRNA(Glu) to glutamate 1-semialdehyde (GSA). In Photobacterium profundum (strain SS9), this protein is Glutamyl-tRNA reductase.